A 424-amino-acid polypeptide reads, in one-letter code: Putative fasciclin-like arabinogalactan protein 20 (424 aa).

The chain crosses the membrane as a helical span at residues 46–66 (LLTTFFLIFFVLDIDLVATSM). An FAS1 1 domain is found at 56-194 (VLDIDLVATS…YVVIYGSDEF (139 aa)). Residues N153 and N160 are each glycosylated (N-linked (GlcNAc...) asparagine). The span at 199-226 (TKISDDSSSSSSIPSTTSSTGSIPIPSS) shows a compositional bias: low complexity. The disordered stretch occupies residues 199-246 (TKISDDSSSSSSIPSTTSSTGSIPIPSSATQTPPSPNIASDSTRNLPN). Polar residues predominate over residues 227-246 (ATQTPPSPNIASDSTRNLPN). N-linked (GlcNAc...) asparagine glycans are attached at residues N246, N283, and N287. The 135-residue stretch at 250 to 384 (PVNRFNIFES…IAVHGFNQMI (135 aa)) folds into the FAS1 2 domain. The interval 405-424 (QEEEGVHGEYSSELGDYGLH) is disordered.

Belongs to the fasciclin-like AGP family.

It is found in the membrane. Functionally, may be a cell surface adhesion protein. The chain is Putative fasciclin-like arabinogalactan protein 20 (FLA20) from Arabidopsis thaliana (Mouse-ear cress).